A 500-amino-acid chain; its full sequence is tRNA nucleotidyltransferase cca1 (500 aa).

The interval 122–139 (DYTNSNSSNKLVFGTPLE) is flexible loop. An ERhxxExxxhh motif motif is present at residues 231-241 (ERIGVEVDKML).

The protein belongs to the tRNA nucleotidyltransferase/poly(A) polymerase family.

The enzyme catalyses a tRNA precursor + 2 CTP = a tRNA with a 3' CC end + 2 diphosphate. In terms of biological role, tRNA nucleotidyltransferase involved in the synthesis of the tRNA CCA terminus. In contrast to what is usually observed in eukaryotes for which one enzyme synthesizes the whole tRNA CCA terminus, in S.pombe, cca1 specifically adds two cytidine residues to a tRNA substrate lacking this sequence while cca2 specifically adds the terminal adenosine residue thereby completing the CCA sequence. The chain is tRNA nucleotidyltransferase cca1 from Schizosaccharomyces pombe (strain 972 / ATCC 24843) (Fission yeast).